Consider the following 168-residue polypeptide: Crossover junction endodeoxyribonuclease RuvC (168 aa).

Residues D8, E68, and D140 contribute to the active site. Mg(2+) contacts are provided by D8, E68, and D140.

The protein belongs to the RuvC family. As to quaternary structure, homodimer which binds Holliday junction (HJ) DNA. The HJ becomes 2-fold symmetrical on binding to RuvC with unstacked arms; it has a different conformation from HJ DNA in complex with RuvA. In the full resolvosome a probable DNA-RuvA(4)-RuvB(12)-RuvC(2) complex forms which resolves the HJ. The cofactor is Mg(2+).

The protein localises to the cytoplasm. It carries out the reaction Endonucleolytic cleavage at a junction such as a reciprocal single-stranded crossover between two homologous DNA duplexes (Holliday junction).. Functionally, the RuvA-RuvB-RuvC complex processes Holliday junction (HJ) DNA during genetic recombination and DNA repair. Endonuclease that resolves HJ intermediates. Cleaves cruciform DNA by making single-stranded nicks across the HJ at symmetrical positions within the homologous arms, yielding a 5'-phosphate and a 3'-hydroxyl group; requires a central core of homology in the junction. The consensus cleavage sequence is 5'-(A/T)TT(C/G)-3'. Cleavage occurs on the 3'-side of the TT dinucleotide at the point of strand exchange. HJ branch migration catalyzed by RuvA-RuvB allows RuvC to scan DNA until it finds its consensus sequence, where it cleaves and resolves the cruciform DNA. The sequence is that of Crossover junction endodeoxyribonuclease RuvC from Gluconobacter oxydans (strain 621H) (Gluconobacter suboxydans).